We begin with the raw amino-acid sequence, 603 residues long: Trihelix transcription factor DF1 (603 aa).

Positions 60–118 (NRWPRQETLALLKIRSDMGIAFRDASVKGPLWEEVSRKMAEHGYIRNAKKCKEKFENVY) constitute a Myb-like 1 domain. Disordered regions lie at residues 149–201 (QSTT…SSIP), 220–249 (LSDNSTSSSSSYSTSSDMEMGGGTATTRKK), 333–408 (KQPN…SSSR), and 532–603 (QWPP…TNNL). Low complexity-rich tracts occupy residues 168–178 (NNNNNNNNNNN), 189–198 (TTVMPTLPSS), 221–236 (SDNSTSSSSSYSTSSD), and 344–362 (PQQVRPSMQLNNNNQQQPP). The span at 363–376 (QRSPPPQPPAPLPQ) shows a compositional bias: pro residues. A compositionally biased stretch (polar residues) spans 381 to 408 (VVSTLDTTKTDNGGDQNMTPAASASSSR). In terms of domain architecture, Myb-like 2 spans 401–465 (AASASSSRWP…RCKEKWENIN (65 aa)). The segment covering 532-555 (QWPPAVTTATTTPAAAQPDQQSQP) has biased composition (low complexity). Residues 559 to 586 (NFDDEEGTDEEYDDEDEEEENEEEEGGE) are compositionally biased toward acidic residues. Positions 593-603 (NNNNNKTTNNL) are enriched in low complexity.

The protein resides in the nucleus. In terms of biological role, transcription repressor that negatively regulates root hair growth by directly binding RSL4 promoter and repressing RSL4 expression. Required for the synthesis of seed coat mucilage. The protein is Trihelix transcription factor DF1 of Arabidopsis thaliana (Mouse-ear cress).